The primary structure comprises 431 residues: Histidine--tRNA ligase (431 aa).

It belongs to the class-II aminoacyl-tRNA synthetase family. As to quaternary structure, homodimer.

It localises to the cytoplasm. The catalysed reaction is tRNA(His) + L-histidine + ATP = L-histidyl-tRNA(His) + AMP + diphosphate + H(+). The chain is Histidine--tRNA ligase from Limosilactobacillus fermentum (strain NBRC 3956 / LMG 18251) (Lactobacillus fermentum).